The following is a 508-amino-acid chain: Photosystem II CP47 reaction center protein (508 aa).

Transmembrane regions (helical) follow at residues Ser21 to Ser36, Ile101 to Trp115, Gly140 to Phe156, Ile203 to Thr218, Val237 to Val252, and Cys457 to Arg472.

This sequence belongs to the PsbB/PsbC family. PsbB subfamily. In terms of assembly, PSII is composed of 1 copy each of membrane proteins PsbA, PsbB, PsbC, PsbD, PsbE, PsbF, PsbH, PsbI, PsbJ, PsbK, PsbL, PsbM, PsbT, PsbX, PsbY, PsbZ, Psb30/Ycf12, at least 3 peripheral proteins of the oxygen-evolving complex and a large number of cofactors. It forms dimeric complexes. Binds multiple chlorophylls. PSII binds additional chlorophylls, carotenoids and specific lipids. serves as cofactor.

It localises to the plastid. The protein resides in the chloroplast thylakoid membrane. In terms of biological role, one of the components of the core complex of photosystem II (PSII). It binds chlorophyll and helps catalyze the primary light-induced photochemical processes of PSII. PSII is a light-driven water:plastoquinone oxidoreductase, using light energy to abstract electrons from H(2)O, generating O(2) and a proton gradient subsequently used for ATP formation. The chain is Photosystem II CP47 reaction center protein from Chlorokybus atmophyticus (Soil alga).